The following is a 223-amino-acid chain: Regulator of G-protein signaling 19 (223 aa).

The tract at residues 1–30 (MPTPPEAEKQQTGPEEADQPPSMSSHDAAP) is disordered. Over residues 20 to 29 (PPSMSSHDAA) the composition is skewed to low complexity. 2 positions are modified to phosphoserine: Ser-24 and Ser-103. The RGS domain occupies 96–212 (SFDKLMHSPA…LSSPAYRALL (117 aa)). At Ser-157 the chain carries Phosphoserine; by MAPK1 and MAPK3. Residues 213–223 (LQGASQSSSEA) are interaction with GIPC.

As to quaternary structure, interacts with GIPC PDZ domain. Interacts with GNAO1. Post-translationally, fatty acylated. Heavily palmitoylated in the cysteine string motif. In terms of processing, phosphorylated, mainly on serine residues.

Its subcellular location is the membrane. Inhibits signal transduction by increasing the GTPase activity of G protein alpha subunits thereby driving them into their inactive GDP-bound form. Binds to G-alpha subfamily 1 members, with the order G(i)a3 &gt; G(i)a1 &gt; G(o)a &gt;&gt; G(z)a/G(i)a2. Activity on G(z)-alpha is inhibited by phosphorylation and palmitoylation of the G-protein. The sequence is that of Regulator of G-protein signaling 19 (RGS19) from Bos taurus (Bovine).